We begin with the raw amino-acid sequence, 163 residues long: Bursicon (163 aa).

Residues 1-23 (MKSSVCVLLKVLACILLPGGLNA) form the signal peptide. 5 cysteine pairs are disulfide-bonded: C39-C88, C53-C102, C63-C123, C67-C125, and C85-C128. The 91-residue stretch at 39–129 (CQVTPVIHVL…PLECMCRPCT (91 aa)) folds into the CTCK domain.

As to quaternary structure, heterodimer of burs and pburs.

The protein resides in the secreted. Functionally, final heterodimeric neurohormone released at the end of the molting cycle, involved in the sclerotization (tanning) of the insect cuticle, melanization and wing spreading. This is Bursicon from Aedes aegypti (Yellowfever mosquito).